The primary structure comprises 536 residues: Glutamyl-tRNA(Gln) amidotransferase subunit B, mitochondrial (536 aa).

Residues 1-8 constitute a mitochondrion transit peptide; that stretch reads MLRVHRLY.

Belongs to the GatB/GatE family. GatB subfamily. In terms of assembly, subunit of the heterotrimeric GatFAB amidotransferase (AdT) complex, composed of A, B and F subunits.

The protein localises to the mitochondrion. It catalyses the reaction L-glutamyl-tRNA(Gln) + L-glutamine + ATP + H2O = L-glutaminyl-tRNA(Gln) + L-glutamate + ADP + phosphate + H(+). Its function is as follows. Allows the formation of correctly charged Gln-tRNA(Gln) through the transamidation of misacylated Glu-tRNA(Gln) in the mitochondria. The reaction takes place in the presence of glutamine and ATP through an activated gamma-phospho-Glu-tRNA(Gln). The polypeptide is Glutamyl-tRNA(Gln) amidotransferase subunit B, mitochondrial (Eremothecium gossypii (strain ATCC 10895 / CBS 109.51 / FGSC 9923 / NRRL Y-1056) (Yeast)).